The chain runs to 327 residues: 2-methoxy-6-polyprenyl-1,4-benzoquinol methylase, mitochondrial (327 aa).

A mitochondrion-targeting transit peptide spans 1–49 (MAAPRSCVLWSYCGHGWSRLAGDCRLPGFRRSWLGATLSARSLSQEKRA). S-adenosyl-L-methionine-binding positions include threonine 117, aspartate 171, and 199-200 (DA).

Belongs to the class I-like SAM-binding methyltransferase superfamily. MenG/UbiE family. As to quaternary structure, component of a multi-subunit COQ enzyme complex, composed of at least COQ3, COQ4, COQ5, COQ6, COQ7 and COQ9. Interacts with PYURF; the interaction is direct, stabilizes COQ5 protein and associates PYURF with COQ enzyme complex.

Its subcellular location is the mitochondrion inner membrane. The catalysed reaction is 2-methoxy-6-(all-trans-decaprenyl)benzene-1,4-diol + S-adenosyl-L-methionine = 5-methoxy-2-methyl-3-(all-trans-decaprenyl)benzene-1,4-diol + S-adenosyl-L-homocysteine + H(+). Its pathway is cofactor biosynthesis; ubiquinone biosynthesis. Its function is as follows. Methyltransferase required for the conversion of 2-decaprenyl-6-methoxy-1,4-benzoquinol (DDMQH2) to 2-decaprenyl-3-methyl-6-methoxy-1,4-benzoquinol (DMQH2). In Rattus norvegicus (Rat), this protein is 2-methoxy-6-polyprenyl-1,4-benzoquinol methylase, mitochondrial.